Here is a 115-residue protein sequence, read N- to C-terminus: uncharacterized protein (115 aa).

A signal peptide spans 1–24; it reads MLPLCLTFLSFFLSLGGSFKAVMT. 2 consecutive transmembrane segments (helical) span residues 39-59 and 93-113; these read FWIFNWTVTLIPLNSLVALAI and YLTSLGSNFGGIFVYPLFLLS.

It is found in the membrane. This is an uncharacterized protein from Saccharomyces cerevisiae (strain ATCC 204508 / S288c) (Baker's yeast).